The sequence spans 89 residues: Small ribosomal subunit protein uS15 (89 aa).

The protein belongs to the universal ribosomal protein uS15 family. In terms of assembly, part of the 30S ribosomal subunit. Forms a bridge to the 50S subunit in the 70S ribosome, contacting the 23S rRNA.

Its function is as follows. One of the primary rRNA binding proteins, it binds directly to 16S rRNA where it helps nucleate assembly of the platform of the 30S subunit by binding and bridging several RNA helices of the 16S rRNA. Forms an intersubunit bridge (bridge B4) with the 23S rRNA of the 50S subunit in the ribosome. In Azorhizobium caulinodans (strain ATCC 43989 / DSM 5975 / JCM 20966 / LMG 6465 / NBRC 14845 / NCIMB 13405 / ORS 571), this protein is Small ribosomal subunit protein uS15.